The chain runs to 597 residues: Arginine--tRNA ligase (597 aa).

Residues 125 to 135 carry the 'HIGH' region motif; that stretch reads PNTNKPLHLGH.

It belongs to the class-I aminoacyl-tRNA synthetase family. As to quaternary structure, monomer.

It localises to the cytoplasm. The enzyme catalyses tRNA(Arg) + L-arginine + ATP = L-arginyl-tRNA(Arg) + AMP + diphosphate. The sequence is that of Arginine--tRNA ligase from Parabacteroides distasonis (strain ATCC 8503 / DSM 20701 / CIP 104284 / JCM 5825 / NCTC 11152).